The primary structure comprises 791 residues: Biofilm architecture maintenance protein MbaA (791 aa).

Positions 1 to 23 (MKLNHRILLLIAPVILLSAAASS) are cleaved as a signal peptide. Residues 24–259 (YIIYTSQKNA…NAQLHSIQRE (236 aa)) are Periplasmic-facing. Residues 260–280 (LLLSFGVSALVTVLMLLLLLY) traverse the membrane as a helical segment. The HAMP domain occupies 281 to 333 (RHVINPILHLDKQLEEVENNQRKNIEKLNTDDEIGRLSSRFYAMYSELHSTYQ). Topologically, residues 281 to 791 (RHVINPILHL…FTEPSQSECR (511 aa)) are cytoplasmic. The region spanning 368–509 (QHIWVMYIDL…GKNQVAYYSQ (142 aa)) is the GGDEF domain. The region spanning 518–769 (RNNIERALRL…EISPWLHASN (252 aa)) is the EAL domain.

It localises to the cell inner membrane. In terms of biological role, plays an essential role in the maintenance and the formation of the three-dimensional structure of the biofilms at the later stages of their development. Absence of mbaA promotes the accumulation of larger amount of biomass on the surfaces at later stage of development, results in the overproduction of an extracellular polymeric substance that accumulates in the matrix of biofilms. This yields biofilms lacking the typical structure consisting of pillars of cells separated by fluid filled channels. The sequence is that of Biofilm architecture maintenance protein MbaA (mbaA) from Vibrio cholerae serotype O1 (strain ATCC 39315 / El Tor Inaba N16961).